A 183-amino-acid chain; its full sequence is Orotate phosphoribosyltransferase (183 aa).

Residues Arg90, Lys91, Lys94, and 115 to 123 contribute to the 5-phospho-alpha-D-ribose 1-diphosphate site; that span reads DDVATTGGS. Orotate contacts are provided by Thr119 and Arg147.

Belongs to the purine/pyrimidine phosphoribosyltransferase family. PyrE subfamily. As to quaternary structure, homodimer. The cofactor is Mg(2+).

The catalysed reaction is orotidine 5'-phosphate + diphosphate = orotate + 5-phospho-alpha-D-ribose 1-diphosphate. Its pathway is pyrimidine metabolism; UMP biosynthesis via de novo pathway; UMP from orotate: step 1/2. Catalyzes the transfer of a ribosyl phosphate group from 5-phosphoribose 1-diphosphate to orotate, leading to the formation of orotidine monophosphate (OMP). This Methanopyrus kandleri (strain AV19 / DSM 6324 / JCM 9639 / NBRC 100938) protein is Orotate phosphoribosyltransferase.